A 168-amino-acid chain; its full sequence is MFEQEDEWISKTQMKKQMNDLQDLGMALTKLSNDTLKKIGLDADLYEAVTAYKKITSNGALKRQAQFIGRLMRDTDPAPIEAFLAKLRGDDAAHNAFLQRVEQARVRLLADDGALTQFMSDFPHADAGKLRTLIRNTKKEQEQNKPPKNFRALFQELKTVMENGDAEI.

This sequence belongs to the DarP family.

The protein resides in the cytoplasm. Functionally, member of a network of 50S ribosomal subunit biogenesis factors which assembles along the 30S-50S interface, preventing incorrect 23S rRNA structures from forming. Promotes peptidyl transferase center (PTC) maturation. This is Dual-action ribosomal maturation protein DarP from Neisseria meningitidis serogroup B (strain ATCC BAA-335 / MC58).